The following is a 349-amino-acid chain: Phosphate carrier protein, mitochondrial (349 aa).

Solcar repeat units follow at residues 47-131 (KYFA…FKVQ), 144-229 (YRTF…TVEL), and 246-324 (EQLV…VKVW). The next 6 membrane-spanning stretches (helical) occupy residues 48-68 (YFAL…TAVV), 108-128 (APTF…YEVF), 147-167 (FVYL…LSPL), 207-227 (PLWG…EKTV), 248-268 (LVVT…VSHP), and 304-324 (IIMI…VKVW).

Belongs to the mitochondrial carrier (TC 2.A.29) family.

The protein resides in the mitochondrion inner membrane. Transport of phosphate groups from the cytosol to the mitochondrial matrix. This chain is Phosphate carrier protein, mitochondrial, found in Choristoneura fumiferana (Spruce budworm moth).